Here is a 450-residue protein sequence, read N- to C-terminus: Beta-glucosidase (450 aa).

The active-site Proton donor is Glu166. Glu355 acts as the Nucleophile in catalysis.

The protein belongs to the glycosyl hydrolase 1 family.

The catalysed reaction is Hydrolysis of terminal, non-reducing beta-D-glucosyl residues with release of beta-D-glucose.. In Niallia circulans (Bacillus circulans), this protein is Beta-glucosidase (bglA).